Here is a 566-residue protein sequence, read N- to C-terminus: Transcriptional regulatory protein XylR (566 aa).

The 230-residue stretch at 235–464 (GIGHSPAYKR…LENALERGVI (230 aa)) folds into the Sigma-54 factor interaction domain. Residues 263–270 (GETGVGKE) and 326–335 (ANGGTIFLDE) each bind ATP. The H-T-H motif DNA-binding region spans 534 to 553 (ISQAARLLGLTRPAMAYRLK).

In terms of biological role, regulatory protein of the TOL plasmid xyl operons. In the presence of m-xylene or m-methylbenzyl alcohol XylR activates both the xylCMABN operon and the regulatory gene xylS; xylS itself activates the xylXYZLTEGFJQKIH operon. XylR interacts with sigma-54. The sequence is that of Transcriptional regulatory protein XylR (xylR) from Pseudomonas putida (Arthrobacter siderocapsulatus).